The chain runs to 223 residues: Urease accessory protein UreF (223 aa).

The protein belongs to the UreF family. As to quaternary structure, ureD, UreF and UreG form a complex that acts as a GTP-hydrolysis-dependent molecular chaperone, activating the urease apoprotein by helping to assemble the nickel containing metallocenter of UreC. The UreE protein probably delivers the nickel.

The protein localises to the cytoplasm. Required for maturation of urease via the functional incorporation of the urease nickel metallocenter. The chain is Urease accessory protein UreF from Rhizobium etli (strain CIAT 652).